We begin with the raw amino-acid sequence, 397 residues long: Lysophospholipid transporter LplT (397 aa).

At 1–17 (MSESVHTNTSLWSKGMK) the chain is on the periplasmic side. A helical membrane pass occupies residues 18–38 (AVIVAQFLSAFGDNALLFATL). The Cytoplasmic portion of the chain corresponds to 39 to 52 (ALLKAQFYPEWSQP). The chain crosses the membrane as a helical span at residues 53 to 73 (ILQMVFVGAYILFAPFVGQVA). The Periplasmic segment spans residues 74–90 (DSFAKGRVMMFANGLKL). Residues 91–111 (LGAASICFGINPFLGYTLVGV) traverse the membrane as a helical segment. Over 112–144 (GAAAYSPAKYGILGELTTGSKLVKANGLMEAST) the chain is Cytoplasmic. Residues 145 to 165 (IAAILLGSVAGGVLADWHVLV) form a helical membrane-spanning segment. A topological domain (periplasmic) is located at residue A166. A helical transmembrane segment spans residues 167–187 (LAACALAYGGAVVANIYIPKL). Residues 188–226 (AAARPGQSWNLINMTRSFLNACTSLWRNGETRFSLVGTS) lie on the Cytoplasmic side of the membrane. A helical transmembrane segment spans residues 227–247 (LFWGAGVTLRFLLVLWVPVAL). Over 248–256 (GITDNATPT) the chain is Periplasmic. A helical membrane pass occupies residues 257-277 (YLNAMVAIGIVVGAGAAAKLV). At 278 to 280 (TLE) the chain is on the cytoplasmic side. The chain crosses the membrane as a helical span at residues 281–301 (TVSRCMPAGILIGVVVLIFSL). Residues 302–304 (QHE) are Periplasmic-facing. The helical transmembrane segment at 305-325 (LLPAYALLMLIGVMGGFFVVP) threads the bilayer. Residues 326–343 (LNALLQERGKKSVGAGNA) lie on the Cytoplasmic side of the membrane. A helical membrane pass occupies residues 344-364 (IAVQNLGENSAMLLMLGIYSL). At 365–366 (AV) the chain is on the periplasmic side. A helical membrane pass occupies residues 367-387 (MVGIPVVPIGIGFGALFALAI). The Cytoplasmic portion of the chain corresponds to 388–397 (TALWIWQRRH).

Belongs to the major facilitator superfamily. LplT (TC 2.A.1.42) family.

The protein localises to the cell inner membrane. In terms of biological role, catalyzes the facilitated diffusion of 2-acyl-glycero-3-phosphoethanolamine (2-acyl-GPE) into the cell. This chain is Lysophospholipid transporter LplT, found in Escherichia coli (strain ATCC 8739 / DSM 1576 / NBRC 3972 / NCIMB 8545 / WDCM 00012 / Crooks).